The chain runs to 442 residues: Interferon-related developmental regulator 2 (442 aa).

Basic residues predominate over residues 1 to 15 (MPRARKGNTLRKGGQ). Positions 1–71 (MPRARKGNTL…DVVDEQGQQE (71 aa)) are disordered. Residues 43-56 (TASECPSLLSTTAE) show a composition bias toward polar residues.

The protein belongs to the IFRD family. In terms of assembly, associates with ribosomes; promoting ribosome inactivation. Expressed in many tissues including heart, brain, placenta, lung, liver, skeletal muscle, kidney and pancreas.

In terms of biological role, ribosome-binding protein that acts as an inhibitor of mRNA translation by promoting ribosome inactivation. Associates with the P- and E-sites of the ribosome and inserts a C-terminal helix into the mRNA exit channel to preclude translation. The sequence is that of Interferon-related developmental regulator 2 from Homo sapiens (Human).